We begin with the raw amino-acid sequence, 1458 residues long: MGLRPGIFLLELLLLLGQGTPQIHTSPRKSTLEGQLWPETLKNSPFPCNPNKLGVNMPSKSVHSLKPSDIKFVAAIGNLEIPPDPGTGDLEKQDWTERPQQVCMGVMTVLSDIIRYFSPSVPMPVCHTGKRVIPHDGAEDLWIQAQELVRNMKENLQLDFQFDWKLINVFFSNASQCYLCPSAQQNGLAAGGVDELMGVLDYLQQEVPRAFVNLVDLSEVAEVSRQYHGTWLSPAPEPCNCSEETTRLAKVVMQWSYQEAWNSLLASSRYSEQESFTVVFQPFFYETTPSLHSEDPRLQDSTTLAWHLWNRMMEPAGEKDEPLSVKHGRPMKCPSQESPYLFSYRNSNYLTRLQKPQDKLEVREGAEIRCPDKDPSDTVPTSVHRLKPADINVIGALGDSLTAGNGAGSTPGNVLDVLTQYRGLSWSVGGDENIGTVTTLANILREFNPSLKGFSVGTGKETSPNAFLNQAVAGGRAEDLPVQARRLVDLMKNDTRIHFQEDWKIITLFIGGNDLCDFCNDLVHYSPQNFTDNIGKALDILHAEVPRAFVNLVTVLEIVNLRELYQEKKVYCPRMILRSLCPCVLKFDDNSTELATLIEFNKKFQEKTHQLIESGRYDTREDFTVVVQPFFENVDMPKTSEGLPDNSFFAPDCFHFSSKSHSRAASALWNNMLEPVGQKTTRHKFENKINITCPNQVQPFLRTYKNSMQGHGTWLPCRDRAPSALHPTSVHALRPADIQVVAALGDSLTAGNGIGSKPDDLPDVTTQYRGLSYSAGGDGSLENVTTLPNILREFNRNLTGYAVGTGDANDTNAFLNQAVPGAKAEDLMSQVQTLMQKMKDDHRVNFHEDWKVITVLIGGSDLCDYCTDSNLYSAANFVHHLRNALDVLHREVPRVLVNLVDFLNPTIMRQVFLGNPDKCPVQQASVLCNCVLTLRENSQELARLEAFSRAYRSSMRELVGSGRYDTQEDFSVVLQPFFQNIQLPVLADGLPDTSFFAPDCIHPNQKFHSQLARALWTNMLEPLGSKTETLDLRAEMPITCPTQNEPFLRTPRNSNYTYPIKPAIENWGSDFLCTEWKASNSVPTSVHQLRPADIKVVAALGDSLTTAVGARPNNSSDLPTSWRGLSWSIGGDGNLETHTTLPNILKKFNPYLLGFSTSTWEGTAGLNVAAEGARARDMPAQAWDLVERMKNSPDINLEKDWKLVTLFIGVNDLCHYCENPEAHLATEYVQHIQQALDILSEELPRAFVNVVEVMELASLYQGQGGKCAMLAAQNNCTCLRHSQSSLEKQELKKVNWNLQHGISSFSYWHQYTQREDFAVVVQPFFQNTLTPLNERGDTDLTFFSEDCFHFSDRGHAEMAIALWNNMLEPVGRKTTSNNFTHSRAKLKCPSPESPYLYTLRNSRLLPDQAEEAPEVLYWAVPVAAGVGLVVGIIGTVVWRCRRGGRREDPPMSLRTVAL.

A signal peptide spans 1 to 21 (MGLRPGIFLLELLLLLGQGTP). Residues 22–1417 (QIHTSPRKST…QAEEAPEVLY (1396 aa)) lie on the Extracellular side of the membrane. 3 repeat units span residues 39-347 (ETLK…YRNS), 362-707 (VREG…YKNS), and 708-1054 (MQGH…PRNS). Residues 39 to 1402 (ETLKNSPFPC…SPYLYTLRNS (1364 aa)) form a 4 X 308-326 AA approximate repeats region. Residues Asn-173 and Asn-240 are each glycosylated (N-linked (GlcNAc...) asparagine). Ser-400 is a catalytic residue. An N-linked (GlcNAc...) asparagine glycan is attached at Asn-493. Asp-514 is a catalytic residue. N-linked (GlcNAc...) asparagine glycans are attached at residues Asn-529 and Asn-590. His-655 is a catalytic residue. N-linked (GlcNAc...) asparagine glycosylation is found at Asn-690, Asn-783, Asn-797, Asn-809, Asn-1055, Asn-1113, Asn-1275, and Asn-1378. The stretch at 1064–1402 (IENWGSDFLC…SPYLYTLRNS (339 aa)) is repeat 4. The tract at residues 1403 to 1445 (RLLPDQAEEAPEVLYWAVPVAAGVGLVVGIIGTVVWRCRRGGR) is necessary for membrane localization. The helical transmembrane segment at 1418 to 1438 (WAVPVAAGVGLVVGIIGTVVW) threads the bilayer. At 1439 to 1458 (RCRRGGRREDPPMSLRTVAL) the chain is on the cytoplasmic side.

It belongs to the 'GDSL' lipolytic enzyme family. Phospholipase B1 subfamily. In terms of processing, undergoes proteolytic cleavage in the ileum. Expressed in the epidermis (at protein level).

The protein localises to the apical cell membrane. It carries out the reaction a 1,2-diacyl-sn-glycero-3-phosphocholine + H2O = a 1-acyl-sn-glycero-3-phosphocholine + a fatty acid + H(+). It catalyses the reaction a 1-O-alkyl-2-acyl-sn-glycero-3-phosphocholine + H2O = a 1-O-alkyl-sn-glycero-3-phosphocholine + a fatty acid + H(+). The catalysed reaction is a 1-acyl-sn-glycero-3-phosphocholine + H2O = sn-glycerol 3-phosphocholine + a fatty acid + H(+). The enzyme catalyses a triacylglycerol + H2O = a diacylglycerol + a fatty acid + H(+). It carries out the reaction 1,2-dihexadecanoyl-sn-glycero-3-phosphocholine + H2O = 1-hexadecanoyl-sn-glycero-3-phosphocholine + hexadecanoate + H(+). It catalyses the reaction 1-hexadecanoyl-2-(9Z-octadecenoyl)-sn-glycero-3-phosphocholine + H2O = 1-hexadecanoyl-sn-glycero-3-phosphocholine + (9Z)-octadecenoate + H(+). The catalysed reaction is 1,2-di-(9Z-octadecenoyl)-sn-glycero-3-phosphocholine + H2O = 1-(9Z-octadecenoyl)-sn-glycero-3-phosphocholine + (9Z)-octadecenoate + H(+). The enzyme catalyses 1-hexadecanoyl-2-(9Z,12Z-octadecadienoyl)-sn-glycero-3-phosphocholine + H2O = (9Z,12Z)-octadecadienoate + 1-hexadecanoyl-sn-glycero-3-phosphocholine + H(+). It carries out the reaction 1-hexadecanoyl-2-(9Z,12Z-octadecadienoyl)-sn-glycero-3-phosphocholine + H2O = 2-(9Z,12Z-octadecadienoyl)-sn-glycero-3-phosphocholine + hexadecanoate + H(+). It catalyses the reaction 1-hexadecanoyl-2-(9Z-octadecenoyl)-sn-glycero-3-phosphoethanolamine + H2O = 1-hexadecanoyl-sn-glycero-3-phosphoethanolamine + (9Z)-octadecenoate + H(+). The catalysed reaction is 1-hexadecanoyl-2-(9Z-octadecenoyl)-sn-glycero-3-phospho-(1'-sn-glycerol) + H2O = 1-hexadecanoyl-sn-glycero-3-phospho-(1'-sn-glycerol) + (9Z)-octadecenoate + H(+). The enzyme catalyses 1,2-dihexadecanoyl-sn-glycero-3-phosphocholine + 2 H2O = sn-glycerol 3-phosphocholine + 2 hexadecanoate + 2 H(+). It carries out the reaction 1-O-hexadecyl-2-(9Z)-octadecenoyl-sn-glycero-3-phosphocholine + H2O = 1-O-hexadecyl-sn-glycero-3-phosphocholine + (9Z)-octadecenoate + H(+). It catalyses the reaction 1-hexadecanoyl-sn-glycero-3-phosphocholine + H2O = sn-glycerol 3-phosphocholine + hexadecanoate + H(+). The catalysed reaction is 1,2,3-tri-(9Z-octadecenoyl)-glycerol + H2O = di-(9Z)-octadecenoylglycerol + (9Z)-octadecenoate + H(+). The enzyme catalyses 1-hexadecanoyl-2-(9Z)-octadecenoyl-3-octadecanoyl-sn-glycerol + H2O = 1-hexadecanoyl-2-(9Z-octadecenoyl)-sn-glycerol + octadecanoate + H(+). It carries out the reaction 1,3-dihexadecanoyl-2-(9Z-octadecenoyl)glycerol + H2O = 1,3-dihexadecanoylglycerol + (9Z)-octadecenoate + H(+). It catalyses the reaction 1,3-dihexadecanoyl-2-(9Z-octadecenoyl)glycerol + H2O = 1-hexadecanoyl-2-(9Z-octadecenoyl)-glycerol + hexadecanoate + H(+). The catalysed reaction is 1-hexadecanoyl-2-(9Z)-octadecenoyl-3-octadecanoyl-sn-glycerol + H2O = 1-hexadecanoyl-3-octadecanoyl-sn-glycerol + (9Z)-octadecenoate + H(+). The enzyme catalyses 1-hexadecanoyl-2-(9Z)-octadecenoyl-3-octadecanoyl-sn-glycerol + H2O = 2-(9Z-octadecenoyl)-3-octadecanoyl-sn-glycerol + hexadecanoate + H(+). It carries out the reaction 1-octadecanoyl-2-(9Z,12Z)-octadecadienoyl-sn-glycerol + H2O = 1-octadecanoyl-sn-glycerol + (9Z,12Z)-octadecadienoate + H(+). It catalyses the reaction 1,2-di-(9Z-octadecenoyl)-sn-glycerol + H2O = 1-(9Z-octadecenoyl)-sn-glycerol + (9Z)-octadecenoate + H(+). The catalysed reaction is 2,3-di-(9Z)-octadecenoyl-sn-glycerol + H2O = 3-(9Z-octadecenoyl)-sn-glycerol + (9Z)-octadecenoate + H(+). The enzyme catalyses 1,3-di-(9Z-octadecenoyl)-glycerol + H2O = 1-(9Z-octadecenoyl)-glycerol + (9Z)-octadecenoate + H(+). It carries out the reaction 1-(9Z-octadecenoyl)-glycerol + H2O = glycerol + (9Z)-octadecenoate + H(+). It catalyses the reaction 2-(9Z-octadecenoyl)-glycerol + H2O = glycerol + (9Z)-octadecenoate + H(+). In terms of biological role, calcium-independent membrane-associated phospholipase that catalyzes complete diacylation of phospholipids by hydrolyzing both sn-1 and sn-2 fatty acyl chains attached to the glycerol backbone (phospholipase B activity). Has dual phospholipase and lysophospholipase activities toward diacylphospholipids. Preferentially cleaves sn-2 ester bonds over sn-1 bonds. Acts as a lipase toward glycerolipid substrates. Hydrolyzes fatty acyl chains of diacylglycerols with preference for the sn-2 position and of triacylglycerols with not positional selectivity. May also hydrolyze long chain retinyl esters such as retinyl palmitate. May contribute to digestion of dietary phospholipids, glycerolipids and retinoids, facilitating lipid absorption at the brush border. This chain is Phospholipase B1, membrane-associated (PLB1), found in Homo sapiens (Human).